The chain runs to 594 residues: Phostensin (594 aa).

Composition is skewed to basic and acidic residues over residues 18-33 (EEAA…RDRL) and 109-125 (VLGD…ERRS). Disordered regions lie at residues 18–238 (EEAA…PTDV) and 294–485 (VQDI…GKKR). A phosphoserine mark is found at Ser-126, Ser-134, Ser-174, and Ser-194. 2 stretches are compositionally biased toward basic and acidic residues: residues 133–155 (QSPK…DRRL) and 167–190 (SLRD…EAQK). Thr-198 is subject to Phosphothreonine. Ser-224 carries the phosphoserine modification. Positions 353-364 (EAEEEAEKEEAE) are enriched in acidic residues. Positions 403–421 (PRPPTPAPLSPPPSAPTAP) are enriched in pro residues. Ser-412 is subject to Phosphoserine. An N6-acetyllysine modification is found at Lys-437. Residue Ser-510 is modified to Phosphoserine. A disordered region spans residues 531-577 (YQYPSESSVLEDLGPEPETPIAPLATQPDEEEEEEEEEEELLLQPGL). Acidic residues predominate over residues 558–571 (PDEEEEEEEEEEEL).

In terms of assembly, interacts with Protein phosphatase 1 (PP1).

The protein resides in the cytoplasm. It is found in the cytoskeleton. In terms of biological role, may target protein phosphatase 1 to F-actin cytoskeleton. This Mus musculus (Mouse) protein is Phostensin (Ppp1r18).